Reading from the N-terminus, the 600-residue chain is Torsin-1A-interacting protein 1 (600 aa).

Basic and acidic residues predominate over residues 1–14; the sequence is MAGEGQRAEPEREG. 2 disordered regions span residues 1-261 and 310-346; these read MAGE…YKES and MRSIYGSFSDDDSVQKSELGNQSPSTSNQQMTGQPKS. At 1–354 the chain is on the nuclear side; that stretch reads MAGEGQRAEP…KSVSSVKTKR (354 aa). Position 61 is a phosphoserine (Ser61). Composition is skewed to basic and acidic residues over residues 71–81, 91–102, and 116–125; these read FEPRAAKEKAR, FRPDSAKEEVRE, and RLHEAEEMQT. 6 positions are modified to phosphoserine: Ser137, Ser145, Ser156, Ser158, Ser159, and Ser189. Over residues 192 to 203 the composition is skewed to low complexity; that stretch reads PLISLRRPPLRS. The span at 219 to 232 shows a compositional bias: acidic residues; that stretch reads EEGETEENDQDSFD. Thr223 carries the phosphothreonine modification. Phosphoserine is present on residues Ser230, Ser233, and Ser244. The span at 247-261 shows a compositional bias: polar residues; the sequence is SGDQTTRSSSQYKES. Ser322 carries the phosphoserine modification. Lys325 is covalently cross-linked (Glycyl lysine isopeptide (Lys-Gly) (interchain with G-Cter in SUMO2)). Positions 325–346 are enriched in polar residues; the sequence is KSELGNQSPSTSNQQMTGQPKS. Ser332 bears the Phosphoserine mark. The chain crosses the membrane as a helical span at residues 355–371; it reads YWPFAVIAALLIGGFLY. Topologically, residues 372-600 are perinuclear space; the sequence is TRPPEAETTA…ENDLKKGICL (229 aa). Residues 373-600 are interaction with TOR1A; that stretch reads RPPEAETTAV…ENDLKKGICL (228 aa). Residues 376-452 are a coiled coil; the sequence is EAETTAVQEF…SEQIADAYSS (77 aa). Asn416 carries an N-linked (GlcNAc...) asparagine glycan.

The protein belongs to the TOR1AIP family. Interacts with ATP1B4. Interacts with TOR1A (ATP-bound). Interacts with TOR1B, TOR2A and TOR3A. Interacts with VIM.

It is found in the nucleus inner membrane. In terms of biological role, required for nuclear membrane integrity. Induces TOR1A and TOR1B ATPase activity and is required for their location on the nuclear membrane. Binds to A- and B-type lamins. Possible role in membrane attachment and assembly of the nuclear lamina. This Bos taurus (Bovine) protein is Torsin-1A-interacting protein 1 (TOR1AIP1).